A 545-amino-acid chain; its full sequence is CTP synthase (545 aa).

An amidoligase domain region spans residues 1–266; the sequence is MTTNYIFVTG…DDYICKRFSL (266 aa). Ser14 is a binding site for CTP. Ser14 is a binding site for UTP. Residues 15–20 and Asp72 contribute to the ATP site; that span reads SLGKGI. Positions 72 and 140 each coordinate Mg(2+). CTP-binding positions include 147–149, 187–192, and Lys223; these read DIE and KTKPTQ. UTP contacts are provided by residues 187-192 and Lys223; that span reads KTKPTQ. 239–241 lines the ATP pocket; the sequence is KDV. The Glutamine amidotransferase type-1 domain maps to 291-542; the sequence is TIGMVGKYIE…VKAASEFQKR (252 aa). Gly352 serves as a coordination point for L-glutamine. Catalysis depends on Cys379, which acts as the Nucleophile; for glutamine hydrolysis. L-glutamine is bound by residues 380–383, Glu403, and Arg470; that span reads LGMQ. Residues His515 and Glu517 contribute to the active site.

This sequence belongs to the CTP synthase family. Homotetramer.

The catalysed reaction is UTP + L-glutamine + ATP + H2O = CTP + L-glutamate + ADP + phosphate + 2 H(+). The enzyme catalyses L-glutamine + H2O = L-glutamate + NH4(+). It carries out the reaction UTP + NH4(+) + ATP = CTP + ADP + phosphate + 2 H(+). The protein operates within pyrimidine metabolism; CTP biosynthesis via de novo pathway; CTP from UDP: step 2/2. With respect to regulation, allosterically activated by GTP, when glutamine is the substrate; GTP has no effect on the reaction when ammonia is the substrate. The allosteric effector GTP functions by stabilizing the protein conformation that binds the tetrahedral intermediate(s) formed during glutamine hydrolysis. Inhibited by the product CTP, via allosteric rather than competitive inhibition. Functionally, catalyzes the ATP-dependent amination of UTP to CTP with either L-glutamine or ammonia as the source of nitrogen. Regulates intracellular CTP levels through interactions with the four ribonucleotide triphosphates. This Shigella boydii serotype 18 (strain CDC 3083-94 / BS512) protein is CTP synthase.